We begin with the raw amino-acid sequence, 439 residues long: COBRA-like protein 7 (439 aa).

The signal sequence occupies residues 1 to 22; the sequence is MDVDQLILFVFVCCLSSRFADA. Residues N138, N181, N186, N232, N312, and N346 are each glycosylated (N-linked (GlcNAc...) asparagine). Residue N412 is the site of GPI-anchor amidated asparagine attachment. The propeptide at 413–439 is removed in mature form; that stretch reads GGPDSRVSAAQLIASSCLLLPFIFLIM.

The protein belongs to the COBRA family.

Its subcellular location is the cell membrane. Functionally, involved in determining the orientation of cell expansion, probably by playing an important role in cellulose deposition. May act by recruiting cellulose synthesizing complexes to discrete positions on the cell surface. This chain is COBRA-like protein 7 (BC1LP1), found in Oryza sativa subsp. japonica (Rice).